A 460-amino-acid chain; its full sequence is Argininosuccinate lyase (460 aa).

The protein belongs to the lyase 1 family. Argininosuccinate lyase subfamily.

The protein resides in the cytoplasm. It catalyses the reaction 2-(N(omega)-L-arginino)succinate = fumarate + L-arginine. Its pathway is amino-acid biosynthesis; L-arginine biosynthesis; L-arginine from L-ornithine and carbamoyl phosphate: step 3/3. The polypeptide is Argininosuccinate lyase (Parvibaculum lavamentivorans (strain DS-1 / DSM 13023 / NCIMB 13966)).